Reading from the N-terminus, the 65-residue chain is Large ribosomal subunit protein bL35 (65 aa).

Composition is skewed to basic residues over residues 1–16 (MPKM…RFKK) and 31–45 (HRFH…RQLR). Residues 1 to 47 (MPKMKTHRASAKRFKKTANGGLKSASAYTSHRFHGKTKKQRRQLRGT) are disordered.

This sequence belongs to the bacterial ribosomal protein bL35 family.

This Leuconostoc citreum (strain KM20) protein is Large ribosomal subunit protein bL35.